Here is a 426-residue protein sequence, read N- to C-terminus: Tyrosine--tRNA ligase (426 aa).

Tyr37 is a binding site for L-tyrosine. Positions 42 to 51 match the 'HIGH' region motif; sequence PTADSLHLGH. Tyr175 and Gln179 together coordinate L-tyrosine. Residues 235 to 239 carry the 'KMSKS' region motif; that stretch reads KFGKT. Lys238 serves as a coordination point for ATP. Positions 357–415 constitute an S4 RNA-binding domain; it reads TDLMQALVESELQPSRGQARKAIAANGVTVNGIKQPDPDYVLNENDRYFSNYTLLRRGK.

It belongs to the class-I aminoacyl-tRNA synthetase family. TyrS type 1 subfamily. In terms of assembly, homodimer.

The protein resides in the cytoplasm. The catalysed reaction is tRNA(Tyr) + L-tyrosine + ATP = L-tyrosyl-tRNA(Tyr) + AMP + diphosphate + H(+). Its function is as follows. Catalyzes the attachment of tyrosine to tRNA(Tyr) in a two-step reaction: tyrosine is first activated by ATP to form Tyr-AMP and then transferred to the acceptor end of tRNA(Tyr). In Klebsiella pneumoniae (strain 342), this protein is Tyrosine--tRNA ligase.